A 357-amino-acid chain; its full sequence is O-methyltransferase pgmB (357 aa).

Residue Asp206 coordinates S-adenosyl-L-methionine. The active-site Proton acceptor is the His256.

It belongs to the class I-like SAM-binding methyltransferase superfamily. Cation-independent O-methyltransferase family.

The protein operates within pigment biosynthesis. It functions in the pathway secondary metabolite biosynthesis. Functionally, O-methyltransferase; part of the gene cluster that mediates the biosynthesis of pleosporalin A, ascomycone A, as well as a third cryptic naphthoquinone derived pigment, all responsible for the coloration of conidia. Specifically methylates position C-6 of the pgmA product 3-acetonyl-1,6,8-trihydroxy-2-naphthaldehyde to yield fusarubinaldehyde. The pathway begins with the biosynthesis of the cyclized heptaketide 3-acetonyl-1,6,8-trihydroxy-2-naphthaldehyde by the NR-PKS pgmA. The C-6 hydroxyl group is further methylated by the O-methyltransferase pgmB to yield fusarubinaldehyde which is in turn oxidized by the cytochrome P450 monooxygenase pgmC at C-9. The C-1 hydroxyl group is then methylated spontaneously. Although pgmE, pgmD and pgmH are essential for the production of pleosporalin A, it is not the case for the 2 other final products and it remains difficult to assign a specific function to each enzyme. PgmF and pgmG seem not to be involved in pigment biosynthesis although they were regulated by the cluster-specific transcription factor pgmR. This chain is O-methyltransferase pgmB, found in Aspergillus terreus (strain NIH 2624 / FGSC A1156).